Here is a 373-residue protein sequence, read N- to C-terminus: Flagellar P-ring protein (373 aa).

Positions 1-27 are cleaved as a signal peptide; the sequence is MPSFSPTLLKLAAAALSALLLSGVAAS.

Belongs to the FlgI family. The basal body constitutes a major portion of the flagellar organelle and consists of four rings (L,P,S, and M) mounted on a central rod.

It is found in the periplasm. Its subcellular location is the bacterial flagellum basal body. Its function is as follows. Assembles around the rod to form the L-ring and probably protects the motor/basal body from shearing forces during rotation. The chain is Flagellar P-ring protein from Rhodopseudomonas palustris (strain BisB5).